A 397-amino-acid polypeptide reads, in one-letter code: Phosphoglycerate kinase (397 aa).

Substrate-binding positions include 21-23 (DFN), R36, 59-62 (HCGR), R118, and R151. ATP is bound by residues K201, E323, and 353–356 (GGDT).

The protein belongs to the phosphoglycerate kinase family. As to quaternary structure, monomer.

The protein localises to the cytoplasm. The enzyme catalyses (2R)-3-phosphoglycerate + ATP = (2R)-3-phospho-glyceroyl phosphate + ADP. The protein operates within carbohydrate degradation; glycolysis; pyruvate from D-glyceraldehyde 3-phosphate: step 2/5. The polypeptide is Phosphoglycerate kinase (Bartonella quintana (strain Toulouse) (Rochalimaea quintana)).